Here is a 28-residue protein sequence, read N- to C-terminus: Phospholipase A2 2 (28 aa).

Belongs to the phospholipase A2 family. Group I subfamily. Requires Ca(2+) as cofactor. Expressed by the venom gland.

Its subcellular location is the secreted. It catalyses the reaction a 1,2-diacyl-sn-glycero-3-phosphocholine + H2O = a 1-acyl-sn-glycero-3-phosphocholine + a fatty acid + H(+). Snake venom phospholipase A2 (PLA2) that inhibits neuromuscular transmission by blocking acetylcholine release from the nerve termini. PLA2 catalyzes the calcium-dependent hydrolysis of the 2-acyl groups in 3-sn-phosphoglycerides. In Micrurus nigrocinctus (Central American coral snake), this protein is Phospholipase A2 2.